Consider the following 175-residue polypeptide: CDP-archaeol synthase (175 aa).

The next 4 membrane-spanning stretches (helical) occupy residues 41-61, 78-98, 122-142, and 150-170; these read GLFS…WLSM, YASA…GDMF, FVVG…VSNF, and VLIM…FIGV.

Belongs to the CDP-archaeol synthase family. It depends on Mg(2+) as a cofactor.

The protein resides in the cell membrane. The catalysed reaction is 2,3-bis-O-(geranylgeranyl)-sn-glycerol 1-phosphate + CTP + H(+) = CDP-2,3-bis-O-(geranylgeranyl)-sn-glycerol + diphosphate. It participates in membrane lipid metabolism; glycerophospholipid metabolism. In terms of biological role, catalyzes the formation of CDP-2,3-bis-(O-geranylgeranyl)-sn-glycerol (CDP-archaeol) from 2,3-bis-(O-geranylgeranyl)-sn-glycerol 1-phosphate (DGGGP) and CTP. This reaction is the third ether-bond-formation step in the biosynthesis of archaeal membrane lipids. This Methanosarcina acetivorans (strain ATCC 35395 / DSM 2834 / JCM 12185 / C2A) protein is CDP-archaeol synthase.